Consider the following 185-residue polypeptide: Ribosome-recycling factor (185 aa).

This sequence belongs to the RRF family.

The protein localises to the cytoplasm. Responsible for the release of ribosomes from messenger RNA at the termination of protein biosynthesis. May increase the efficiency of translation by recycling ribosomes from one round of translation to another. In Campylobacter jejuni subsp. doylei (strain ATCC BAA-1458 / RM4099 / 269.97), this protein is Ribosome-recycling factor.